The following is a 740-amino-acid chain: Elongation factor 2 (740 aa).

Positions 23–264 (AQIRNAGTLA…MIIEHVPPPN (242 aa)) constitute a tr-type G domain. GTP is bound by residues 32–39 (AHVDHGKT), 98–102 (DTPGH), and 152–155 (NKID). Histidine 605 bears the Diphthamide mark.

This sequence belongs to the TRAFAC class translation factor GTPase superfamily. Classic translation factor GTPase family. EF-G/EF-2 subfamily.

Its subcellular location is the cytoplasm. In terms of biological role, catalyzes the GTP-dependent ribosomal translocation step during translation elongation. During this step, the ribosome changes from the pre-translocational (PRE) to the post-translocational (POST) state as the newly formed A-site-bound peptidyl-tRNA and P-site-bound deacylated tRNA move to the P and E sites, respectively. Catalyzes the coordinated movement of the two tRNA molecules, the mRNA and conformational changes in the ribosome. The sequence is that of Elongation factor 2 from Pyrobaculum arsenaticum (strain DSM 13514 / JCM 11321 / PZ6).